The primary structure comprises 281 residues: 4-diphosphocytidyl-2-C-methyl-D-erythritol kinase (281 aa).

Lys15 is a catalytic residue. 98–108 (PTGAGLGGGSS) is an ATP binding site. The active site involves Asp140.

Belongs to the GHMP kinase family. IspE subfamily.

The enzyme catalyses 4-CDP-2-C-methyl-D-erythritol + ATP = 4-CDP-2-C-methyl-D-erythritol 2-phosphate + ADP + H(+). It functions in the pathway isoprenoid biosynthesis; isopentenyl diphosphate biosynthesis via DXP pathway; isopentenyl diphosphate from 1-deoxy-D-xylulose 5-phosphate: step 3/6. In terms of biological role, catalyzes the phosphorylation of the position 2 hydroxy group of 4-diphosphocytidyl-2C-methyl-D-erythritol. The protein is 4-diphosphocytidyl-2-C-methyl-D-erythritol kinase of Neisseria meningitidis serogroup B (strain ATCC BAA-335 / MC58).